Here is a 247-residue protein sequence, read N- to C-terminus: ATP synthase subunit a, chloroplastic (247 aa).

Helical transmembrane passes span 38-58 (QVLI…SIAV), 95-115 (VPFI…GALL), 134-154 (INTT…AGLS), 199-219 (LVVV…VMFL), and 220-240 (GLFT…AYIG).

The protein belongs to the ATPase A chain family. F-type ATPases have 2 components, CF(1) - the catalytic core - and CF(0) - the membrane proton channel. CF(1) has five subunits: alpha(3), beta(3), gamma(1), delta(1), epsilon(1). CF(0) has four main subunits: a, b, b' and c.

It localises to the plastid. It is found in the chloroplast thylakoid membrane. Functionally, key component of the proton channel; it plays a direct role in the translocation of protons across the membrane. The chain is ATP synthase subunit a, chloroplastic from Oenothera argillicola (Appalachian evening primrose).